We begin with the raw amino-acid sequence, 150 residues long: Large ribosomal subunit protein bL9 (150 aa).

This sequence belongs to the bacterial ribosomal protein bL9 family.

Its function is as follows. Binds to the 23S rRNA. The sequence is that of Large ribosomal subunit protein bL9 from Corynebacterium glutamicum (strain R).